The primary structure comprises 319 residues: MNYLDFEKPLAEIEGKAEELRAMARREEGMDVEEQAAALDKKAADLLRTLYADLTPWRKCQVARHAQRPHCQDYIDALFTEYTPLAGDRNFADDHAIMGGLARFDDTPVVVIGHEKGHDTKTRIERNFGMARPEGYRKAVRLMDLADRFNLPVITLVDTPGAYPGKGAEERGQSEAIARSTEKCLQIGVPLISVIIGEGGSGGAVAFATADRLAMLEHSVYSVISPEGCASILWKDAEKMREAAEALRLTAQDLHKLGVCDVVINEPLGGAQRNKDAAIESVGKAIASMLAGFGDADRATLIAGRRKKFLDLGSKGLAA.

A CoA carboxyltransferase C-terminal domain is found at 38-292 (ALDKKAADLL…GKAIASMLAG (255 aa)).

This sequence belongs to the AccA family. In terms of assembly, acetyl-CoA carboxylase is a heterohexamer composed of biotin carboxyl carrier protein (AccB), biotin carboxylase (AccC) and two subunits each of ACCase subunit alpha (AccA) and ACCase subunit beta (AccD).

It is found in the cytoplasm. It carries out the reaction N(6)-carboxybiotinyl-L-lysyl-[protein] + acetyl-CoA = N(6)-biotinyl-L-lysyl-[protein] + malonyl-CoA. It participates in lipid metabolism; malonyl-CoA biosynthesis; malonyl-CoA from acetyl-CoA: step 1/1. Component of the acetyl coenzyme A carboxylase (ACC) complex. First, biotin carboxylase catalyzes the carboxylation of biotin on its carrier protein (BCCP) and then the CO(2) group is transferred by the carboxyltransferase to acetyl-CoA to form malonyl-CoA. This is Acetyl-coenzyme A carboxylase carboxyl transferase subunit alpha from Jannaschia sp. (strain CCS1).